Consider the following 259-residue polypeptide: Type III pantothenate kinase (259 aa).

6 to 13 (DVGNTNCT) contacts ATP. Position 107–110 (107–110 (GSDR)) interacts with substrate. Asp109 serves as the catalytic Proton acceptor. K(+) is bound at residue Asp129. Thr132 lines the ATP pocket. Thr184 lines the substrate pocket.

Belongs to the type III pantothenate kinase family. Homodimer. The cofactor is NH4(+). K(+) is required as a cofactor.

It localises to the cytoplasm. The enzyme catalyses (R)-pantothenate + ATP = (R)-4'-phosphopantothenate + ADP + H(+). It functions in the pathway cofactor biosynthesis; coenzyme A biosynthesis; CoA from (R)-pantothenate: step 1/5. In terms of biological role, catalyzes the phosphorylation of pantothenate (Pan), the first step in CoA biosynthesis. This chain is Type III pantothenate kinase, found in Listeria welshimeri serovar 6b (strain ATCC 35897 / DSM 20650 / CCUG 15529 / CIP 8149 / NCTC 11857 / SLCC 5334 / V8).